The primary structure comprises 329 residues: L-threonine dehydratase catabolic TdcB (329 aa).

AMP is bound at residue 53–54 (RT). At Lys58 the chain carries N6-(pyridoxal phosphate)lysine. AMP is bound by residues Gln88, 119–120 (DY), and Asn314.

It belongs to the serine/threonine dehydratase family. In terms of assembly, in the native structure, TdcB is in a dimeric form, whereas in the TdcB-AMP complex, it exists in a tetrameric form (dimer of dimers). Pyridoxal 5'-phosphate serves as cofactor.

It catalyses the reaction L-threonine = 2-oxobutanoate + NH4(+). The catalysed reaction is L-serine = pyruvate + NH4(+). Its pathway is amino-acid degradation; L-threonine degradation via propanoate pathway; propanoate from L-threonine: step 1/4. Its activity is regulated as follows. Each protein molecule can bind up to four molecules of AMP, which act as an allosteric activator to the enzyme. Catalyzes the anaerobic formation of alpha-ketobutyrate and ammonia from threonine in a two-step reaction. The first step involved a dehydration of threonine and a production of enamine intermediates (aminocrotonate), which tautomerizes to its imine form (iminobutyrate). Both intermediates are unstable and short-lived. The second step is the nonenzymatic hydrolysis of the enamine/imine intermediates to form 2-ketobutyrate and free ammonia. In the low water environment of the cell, the second step is accelerated by RidA. TdcB also dehydrates serine to yield pyruvate via analogous enamine/imine intermediates. The chain is L-threonine dehydratase catabolic TdcB (tdcB) from Escherichia coli O157:H7.